Here is a 548-residue protein sequence, read N- to C-terminus: Pentatricopeptide repeat-containing protein At5g15300 (548 aa).

PPR repeat units lie at residues 76–110 (DVSI…GVSP), 111–145 (DRYT…GFVL), 146–176 (NEYV…SAKA), 177–211 (HKVA…DQVA), 212–238 (WNVM…FTEK), 239–273 (DVVT…GEHP), 274–308 (DVVT…ASVS), 314–348 (GTPI…DLST), 349–378 (WNTL…KVWP), 379–409 (NEVT…MRDM), and 415–445 (NIKH…MKIE). The interval 450–525 (VWRTLLGACK…PTGVSLIEED (76 aa)) is type E motif.

Belongs to the PPR family. PCMP-E subfamily.

The chain is Pentatricopeptide repeat-containing protein At5g15300 (PCMP-E40) from Arabidopsis thaliana (Mouse-ear cress).